A 435-amino-acid chain; its full sequence is Ornithine decarboxylase (435 aa).

Lysine 98 carries the N6-(pyridoxal phosphate)lysine modification. Residues serine 230, glycine 268, and 301–304 (EPGR) each bind pyridoxal 5'-phosphate. 344 to 345 (YD) provides a ligand contact to substrate. Cysteine 380 serves as the catalytic Proton donor; shared with dimeric partner. Aspartate 381 is a binding site for substrate. Tyrosine 409 is a binding site for pyridoxal 5'-phosphate.

The protein belongs to the Orn/Lys/Arg decarboxylase class-II family. Homodimer. Only the dimer is catalytically active, as the active sites are constructed of residues from both monomers. It depends on pyridoxal 5'-phosphate as a cofactor.

The enzyme catalyses L-ornithine + H(+) = putrescine + CO2. Its pathway is amine and polyamine biosynthesis; putrescine biosynthesis via L-ornithine pathway; putrescine from L-ornithine: step 1/1. Its activity is regulated as follows. Inhibited by antizyme (AZ) in response to polyamine levels. AZ inhibits the assembly of the functional homodimer by binding to ODC monomers and targeting them for ubiquitin-independent proteolytic destruction by the 26S proteasome. Functionally, catalyzes the first and rate-limiting step of polyamine biosynthesis that converts ornithine into putrescine, which is the precursor for the polyamines, spermidine and spermine. Polyamines are essential for cell proliferation and are implicated in cellular processes, ranging from DNA replication to apoptosis. The protein is Ornithine decarboxylase (ODC) of Capsicum annuum (Capsicum pepper).